Reading from the N-terminus, the 547-residue chain is Solute carrier family 22 member 7 (547 aa).

A helical transmembrane segment spans residues 21–41; sequence VALLALPRVLLPMHFLLPIFL. Polar residues predominate over residues 91–103; that stretch reads NSTLWGEGQNSGE. A disordered region spans residues 91–112; sequence NSTLWGEGQNSGEQPEGEPSTV. Transmembrane regions (helical) follow at residues 145-165, 179-199, 203-223, 233-253, 258-278, 345-365, 367-387, 403-423, 431-451, 465-485, and 492-512; these read AISTFFFAGVLVGAEVYGYLS, VSSLALGLASAASVSYIMFAI, LTGMALAGFTIIVMPLELEWL, VLSSTFWTGGVMLLALIGYLI, WLLLTVTLPCVPGILTLWWVP, ISLCCMVVWFGVNFSYYGVSL, LSGLGLNVYLTQLVFGAVELP, LTMAGTLLGAALAVGLRILVS, TALAVMGKAFSEAAFTTAYLF, MGLTALVGRLGGSLAPLAALL, and LPKLAYGGIALLAACTALLLP. Positions 521-547 are disordered; the sequence is ETIQDVERKSAPSSLQEEEMPMKQVQD.

The protein belongs to the major facilitator (TC 2.A.1) superfamily. Organic cation transporter (TC 2.A.1.19) family.

Its subcellular location is the basolateral cell membrane. The protein resides in the apical cell membrane. The protein localises to the cell membrane. It catalyses the reaction orotate(out) + L-glutamate(in) = orotate(in) + L-glutamate(out). The catalysed reaction is 3',5'-cyclic GMP(in) = 3',5'-cyclic GMP(out). It carries out the reaction GMP(in) = GMP(out). The enzyme catalyses 2'-deoxyguanosine(in) = 2'-deoxyguanosine(out). It catalyses the reaction GDP(in) = GDP(out). The catalysed reaction is guanosine(in) = guanosine(out). It carries out the reaction GTP(in) = GTP(out). The enzyme catalyses 3',5'-cyclic AMP(in) = 3',5'-cyclic AMP(out). It catalyses the reaction creatinine(in) = creatinine(out). The catalysed reaction is prostaglandin E2(out) = prostaglandin E2(in). It carries out the reaction 2-oxoglutarate(in) = 2-oxoglutarate(out). The enzyme catalyses glutarate(in) = glutarate(out). It catalyses the reaction urate(out) = urate(in). The catalysed reaction is estrone 3-sulfate(out) = estrone 3-sulfate(in). Functions as a Na(+)-independent bidirectional multispecific transporter. Contributes to the renal and hepatic elimination of endogenous organic compounds from the systemic circulation into the urine and bile, respectively. Capable of transporting a wide range of purine and pyrimidine nucleobases, nucleosides and nucleotides, with cGMP, 2'deoxyguanosine and GMP being the preferred substrates. Functions as a pH- and chloride-independent cGMP bidirectional facilitative transporter that can regulate both intracellular and extracellular levels of cGMP and may be involved in cGMP signaling pathways. Mediates orotate/glutamate bidirectional exchange and most likely display a physiological role in hepatic release of glutamate into the blood. Involved in renal secretion and possible reabsorption of creatinine. Able to uptake prostaglandin E2 (PGE2) and may contribute to PGE2 renal excretion. Also transports alpha-ketoglutarate and urate. Apart from the orotate/glutamate exchange, the counterions for the uptake of other SLC22A7/OAT2 substrates remain to be identified. The protein is Solute carrier family 22 member 7 (SLC22A7) of Bos taurus (Bovine).